Here is a 185-residue protein sequence, read N- to C-terminus: ATP synthase subunit delta, chloroplastic (185 aa).

The protein belongs to the ATPase delta chain family. In terms of assembly, F-type ATPases have 2 components, F(1) - the catalytic core - and F(0) - the membrane proton channel. F(1) has five subunits: alpha(3), beta(3), gamma(1), delta(1), epsilon(1). CF(0) has four main subunits: a(1), b(1), b'(1) and c(10-14). The alpha and beta chains form an alternating ring which encloses part of the gamma chain. F(1) is attached to F(0) by a central stalk formed by the gamma and epsilon chains, while a peripheral stalk is formed by the delta, b and b' chains.

It is found in the plastid. The protein resides in the chloroplast thylakoid membrane. In terms of biological role, f(1)F(0) ATP synthase produces ATP from ADP in the presence of a proton or sodium gradient. F-type ATPases consist of two structural domains, F(1) containing the extramembraneous catalytic core and F(0) containing the membrane proton channel, linked together by a central stalk and a peripheral stalk. During catalysis, ATP synthesis in the catalytic domain of F(1) is coupled via a rotary mechanism of the central stalk subunits to proton translocation. Its function is as follows. This protein is part of the stalk that links CF(0) to CF(1). It either transmits conformational changes from CF(0) to CF(1) or is implicated in proton conduction. The polypeptide is ATP synthase subunit delta, chloroplastic (Gracilaria tenuistipitata var. liui (Red alga)).